Reading from the N-terminus, the 750-residue chain is 3-isopropylmalate dehydratase (750 aa).

Residues Cys-353, Cys-413, and Cys-416 each contribute to the [4Fe-4S] cluster site. The interval 492 to 524 (KYDGSPEVFKSTQDTTPAVKPPQPASDSSSSGG) is disordered.

Belongs to the aconitase/IPM isomerase family. In terms of assembly, monomer. Requires [4Fe-4S] cluster as cofactor.

The catalysed reaction is (2R,3S)-3-isopropylmalate = (2S)-2-isopropylmalate. It participates in amino-acid biosynthesis; L-leucine biosynthesis; L-leucine from 3-methyl-2-oxobutanoate: step 2/4. Catalyzes the isomerization between 2-isopropylmalate and 3-isopropylmalate, via the formation of 2-isopropylmaleate. The protein is 3-isopropylmalate dehydratase (LEU1) of Rhizopus niveus.